The sequence spans 168 residues: Crossover junction endodeoxyribonuclease RuvC (168 aa).

Catalysis depends on residues aspartate 7, glutamate 66, and aspartate 138. The Mg(2+) site is built by aspartate 7, glutamate 66, and aspartate 138.

It belongs to the RuvC family. In terms of assembly, homodimer which binds Holliday junction (HJ) DNA. The HJ becomes 2-fold symmetrical on binding to RuvC with unstacked arms; it has a different conformation from HJ DNA in complex with RuvA. In the full resolvosome a probable DNA-RuvA(4)-RuvB(12)-RuvC(2) complex forms which resolves the HJ. The cofactor is Mg(2+).

It is found in the cytoplasm. The catalysed reaction is Endonucleolytic cleavage at a junction such as a reciprocal single-stranded crossover between two homologous DNA duplexes (Holliday junction).. The RuvA-RuvB-RuvC complex processes Holliday junction (HJ) DNA during genetic recombination and DNA repair. Endonuclease that resolves HJ intermediates. Cleaves cruciform DNA by making single-stranded nicks across the HJ at symmetrical positions within the homologous arms, yielding a 5'-phosphate and a 3'-hydroxyl group; requires a central core of homology in the junction. The consensus cleavage sequence is 5'-(A/T)TT(C/G)-3'. Cleavage occurs on the 3'-side of the TT dinucleotide at the point of strand exchange. HJ branch migration catalyzed by RuvA-RuvB allows RuvC to scan DNA until it finds its consensus sequence, where it cleaves and resolves the cruciform DNA. This chain is Crossover junction endodeoxyribonuclease RuvC, found in Cereibacter sphaeroides (strain ATCC 17029 / ATH 2.4.9) (Rhodobacter sphaeroides).